Consider the following 220-residue polypeptide: Charged multivesicular body protein 5 (220 aa).

Residues 1–10 (MNRIFGRGKP) show a composition bias toward basic residues. A disordered region spans residues 1-27 (MNRIFGRGKPKGPPPNLTDCISGVDSR). Coiled-coil stretches lie at residues 25–55 (DSRAESVDKKIARLDAELMKYKDQMKKMRDG) and 121–153 (KNVKIDQIEDLQDQLEDMMEDANEVQEALSRSY). The disordered stretch occupies residues 178–206 (DDNSYLDEASSAPAIPEGAPGDRTTNRDG).

This sequence belongs to the SNF7 family. As to quaternary structure, probable peripherally associated component of the endosomal sorting required for transport complex III (ESCRT-III).

It is found in the cytoplasm. The protein localises to the cytosol. It localises to the endosome membrane. Functionally, probable peripherally associated component of the endosomal sorting required for transport complex III (ESCRT-III) which is involved in multivesicular bodies (MVBs) formation and sorting of endosomal cargo proteins into MVBs. MVBs contain intraluminal vesicles (ILVs) that are generated by invagination and scission from the limiting membrane of the endosome and mostly are delivered to lysosomes enabling degradation of membrane proteins, such as stimulated growth factor receptors, lysosomal enzymes and lipids. In Danio rerio (Zebrafish), this protein is Charged multivesicular body protein 5 (chmp5).